Here is a 33-residue protein sequence, read N- to C-terminus: Photosystem II reaction center protein T (33 aa).

Residues Ala3 to Phe23 form a helical membrane-spanning segment.

Belongs to the PsbT family. In terms of assembly, PSII is composed of 1 copy each of membrane proteins PsbA, PsbB, PsbC, PsbD, PsbE, PsbF, PsbH, PsbI, PsbJ, PsbK, PsbL, PsbM, PsbT, PsbY, PsbZ, Psb30/Ycf12, at least 3 peripheral proteins of the oxygen-evolving complex and a large number of cofactors. It forms dimeric complexes.

The protein localises to the plastid. It is found in the chloroplast thylakoid membrane. In terms of biological role, found at the monomer-monomer interface of the photosystem II (PS II) dimer, plays a role in assembly and dimerization of PSII. PSII is a light-driven water plastoquinone oxidoreductase, using light energy to abstract electrons from H(2)O, generating a proton gradient subsequently used for ATP formation. In Helianthus annuus (Common sunflower), this protein is Photosystem II reaction center protein T.